The following is a 196-amino-acid chain: uncharacterized protein (196 aa).

To E.coli YjaG.

This is an uncharacterized protein from Haemophilus influenzae (strain ATCC 51907 / DSM 11121 / KW20 / Rd).